The primary structure comprises 292 residues: Porphobilinogen deaminase (292 aa).

At Cys236 the chain carries S-(dipyrrolylmethanemethyl)cysteine.

Belongs to the HMBS family. In terms of assembly, monomer. The cofactor is dipyrromethane.

It carries out the reaction 4 porphobilinogen + H2O = hydroxymethylbilane + 4 NH4(+). It functions in the pathway porphyrin-containing compound metabolism; protoporphyrin-IX biosynthesis; coproporphyrinogen-III from 5-aminolevulinate: step 2/4. Functionally, tetrapolymerization of the monopyrrole PBG into the hydroxymethylbilane pre-uroporphyrinogen in several discrete steps. This chain is Porphobilinogen deaminase, found in Wolbachia sp. subsp. Drosophila simulans (strain wRi).